We begin with the raw amino-acid sequence, 417 residues long: Arginine biosynthesis bifunctional protein ArgJ (417 aa).

Substrate contacts are provided by Thr162, Lys188, Thr199, Glu289, Asn412, and Ser417. The active-site Nucleophile is Thr199.

The protein belongs to the ArgJ family. In terms of assembly, heterotetramer of two alpha and two beta chains.

It is found in the cytoplasm. The catalysed reaction is N(2)-acetyl-L-ornithine + L-glutamate = N-acetyl-L-glutamate + L-ornithine. It carries out the reaction L-glutamate + acetyl-CoA = N-acetyl-L-glutamate + CoA + H(+). Its pathway is amino-acid biosynthesis; L-arginine biosynthesis; L-ornithine and N-acetyl-L-glutamate from L-glutamate and N(2)-acetyl-L-ornithine (cyclic): step 1/1. It participates in amino-acid biosynthesis; L-arginine biosynthesis; N(2)-acetyl-L-ornithine from L-glutamate: step 1/4. Its function is as follows. Catalyzes two activities which are involved in the cyclic version of arginine biosynthesis: the synthesis of N-acetylglutamate from glutamate and acetyl-CoA as the acetyl donor, and of ornithine by transacetylation between N(2)-acetylornithine and glutamate. The protein is Arginine biosynthesis bifunctional protein ArgJ of Nitrobacter winogradskyi (strain ATCC 25391 / DSM 10237 / CIP 104748 / NCIMB 11846 / Nb-255).